Reading from the N-terminus, the 139-residue chain is uncharacterized protein (139 aa).

Its subcellular location is the mitochondrion. This is an uncharacterized protein from Marchantia polymorpha (Common liverwort).